The following is a 367-amino-acid chain: Germination protease (367 aa).

A propeptide spanning residues Met-1–Asp-15 is cleaved from the precursor.

It belongs to the peptidase A25 family. Homotetramer. Autoproteolytically processed. The inactive tetrameric zymogen termed p46 autoprocesses to a smaller form termed p41, which is active only during spore germination.

The enzyme catalyses Endopeptidase action with P4 Glu or Asp, P1 preferably Glu &gt; Asp, P1' hydrophobic and P2' Ala.. Initiates the rapid degradation of small, acid-soluble proteins during spore germination. The chain is Germination protease from Bacillus mycoides (strain KBAB4) (Bacillus weihenstephanensis).